The sequence spans 1218 residues: NACHT, LRR and PYD domains-containing protein 1a allele 5 (1218 aa).

Residues 1–29 (MGESQSKQESNTRVAQHGSQQDVDPTFQT) show a composition bias toward polar residues. 2 disordered regions span residues 1 to 44 (MGES…QVEQ) and 71 to 91 (EMDH…DRSE). A compositionally biased stretch (basic residues) spans 77–87 (RRHSHQSKKKL). One can recognise an NACHT domain in the interval 175–484 (QLVIIEGAAG…EFFAAMSYIL (310 aa)). Residue 181–188 (GAAGIGKS) coordinates ATP. LRR repeat units follow at residues 343–364 (KERN…LTLC), 673–693 (NLEE…RSLC), and 730–750 (RLAE…RQLC). Positions 799–815 (TMPTENTDGEESLTSSK) are enriched in polar residues. The interval 799–842 (TMPTENTDGEESLTSSKQQQQQSGDKHMEPLGTDDDFWGPSGPV) is disordered. The tract at residues 835 to 968 (FWGPSGPVST…HFAVLENPSF (134 aa)) is ZU5. In terms of domain architecture, FIIND spans 835–1118 (FWGPSGPVST…LRPALPRMAS (284 aa)). The UPA stretch occupies residues 969–1118 (SPMGVLLRMI…LRPALPRMAS (150 aa)). The 90-residue stretch at 1122–1211 (DAPALLHFVD…HLIMDLLEKS (90 aa)) folds into the CARD domain.

The protein belongs to the NLRP family. In terms of assembly, interacts (via LRR repeats) with BCL2 and BCL2L1 (via the loop between motifs BH4 and BH3). Interacts with NOD2; this interaction is enhanced in the presence of muramyl dipeptide (MDP) and increases IL1B release. Interacts with EIF2AK2/PKR; this interaction requires EIF2AK2 activity, is accompanied by EIF2AK2 autophosphorylation and promotes inflammasome assembly in response to danger-associated signals. Interacts with MEFV; this interaction targets Nlrp1a to degradation by autophagy, hence preventing excessive IL1B- and IL18-mediated inflammation. Interacts with DPP9; leading to inhibit activation of the inflammasome. DPP9 acts via formation of a ternary complex, composed of a DPP9 homodimer, one full-length NLRP1 protein, and one cleaved C-terminus of Nlrp1a (NACHT, LRR and PYD domains-containing protein 1a, C-terminus). Interacts with DPP8; leading to inhibit activation of the inflammasome, probably via formation of a ternary complex with DPP8. Interacts with the C-terminal part of Nlrp1a (NACHT, LRR and PYD domains-containing protein 1a, C-terminus) in absence of pathogens and other damage-associated signals. As to quaternary structure, interacts with the N-terminal part of Nlrp1a (NACHT, LRR and PYD domains-containing protein 1a, N-terminus) in absence of pathogens and other damage-associated signals. Homomultimer; forms the Nlrp1a inflammasome polymeric complex, a filament composed of homopolymers of this form in response to pathogens and other damage-associated signals. The Nlrp1a inflammasome polymeric complex directly recruits pro-caspase-1 (proCASP1) independently of PYCARD/ASC. Interacts (via CARD domain) with CASP1 (via CARD domain); leading to CASP1 activation. Autocatalytically cleaved. Autocatalytic cleavage in FIIND region occurs constitutively, prior to activation signals, and is required for inflammasome activity (IL1B release), possibly by facilitating CASP1 binding. Both N- and C-terminal parts remain associated non-covalently. In terms of processing, ubiquitinated in response to pathogen-associated signals, leading to its degradation by the proteasome and subsequent release of the cleaved C-terminal part of the protein (NACHT, LRR and PYD domains-containing protein 1a, C-terminus), which polymerizes and forms the Nlrp1a inflammasome.

Its subcellular location is the cytoplasm. It is found in the cytosol. The protein resides in the nucleus. The protein localises to the inflammasome. With respect to regulation, activated by pathogens and other damage-associated signals: activation promotes ubiquitination and degradation of the N-terminal part, releasing the cleaved C-terminal part of the protein (NACHT, LRR and PYD domains-containing protein 1a, C-terminus), which polymerizes and forms the Nlrp1a inflammasome. Nlrp1a inflammasome is inhibited by DPP8 and DPP9, which sequester the C-terminal fragment of Nlrp1a (NACHT, LRR and PYD domains-containing protein 1a, C-terminus) in a ternary complex, thereby preventing Nlrp1a oligomerization and activation. Nlrp1a inflammasome is strongly activated by Val-boroPro (Talabostat, PT-100), an inhibitor of dipeptidyl peptidases DPP8 and DPP9. Val-boroPro relieves inhibition of DPP8 and/or DPP9 by promoting disruption of the ternary complex, releasing its C-terminal part from autoinhibition. Not activated by cleavage by B.anthracis lethal toxin (LT) endopeptidase. Highly activated by Toxoplasma gondii. Functionally, acts as the sensor component of the Nlrp1a inflammasome, which mediates inflammasome activation in response to various pathogen-associated signals, leading to subsequent pyroptosis. Inflammasomes are supramolecular complexes that assemble in the cytosol in response to pathogens and other damage-associated signals and play critical roles in innate immunity and inflammation. Acts as a recognition receptor (PRR): recognizes specific pathogens and other damage-associated signals, such as Val-boroPro inhibitor, and mediates the formation of the inflammasome polymeric complex. In response to pathogen-associated signals, the N-terminal part of Nlrp1a is degraded by the proteasome, releasing the cleaved C-terminal part of the protein (NACHT, LRR and PYD domains-containing protein 1a, C-terminus), which polymerizes to initiate the formation of the inflammasome complex: the inflammasome directly recruits pro-caspase-1 (proCASP1) independently of PYCARD/ASC and promotes caspase-1 (CASP1) activation, which subsequently cleaves and activates inflammatory cytokines IL1B and IL18 and gasdermin-D (GSDMD), leading to pyroptosis. In the absence of GSDMD expression, the Nlrp1a inflammasome is able to recruit and activate CASP8, leading to activation of gasdermin-E (GSDME). In terms of biological role, constitutes the precursor of the Nlrp1a inflammasome, which mediates autoproteolytic processing within the FIIND domain to generate the N-terminal and C-terminal parts, which are associated non-covalently in absence of pathogens and other damage-associated signals. Its function is as follows. Regulatory part that prevents formation of the Nlrp1a inflammasome: in absence of pathogens and other damage-associated signals, interacts with the C-terminal part of Nlrp1a (NACHT, LRR and PYD domains-containing protein 1a, C-terminus), preventing activation of the Nlrp1a inflammasome. In response to pathogen-associated signals, this part is ubiquitinated by the N-end rule pathway and degraded by the proteasome, releasing the cleaved C-terminal part of the protein, which polymerizes and forms the Nlrp1a inflammasome. Constitutes the active part of the Nlrp1a inflammasome. In absence of pathogens and other damage-associated signals, interacts with the N-terminal part of Nlrp1a (NACHT, LRR and PYD domains-containing protein 1a, N-terminus), preventing activation of the Nlrp1a inflammasome. In response to pathogen-associated signals, the N-terminal part of Nlrp1a is degraded by the proteasome, releasing this form, which polymerizes to form the Nlrp1a inflammasome complex: the Nlrp1a inflammasome complex then directly recruits pro-caspase-1 (proCASP1) and promotes caspase-1 (CASP1) activation, leading to gasdermin-D (GSDMD) cleavage and subsequent pyroptosis. This is NACHT, LRR and PYD domains-containing protein 1a allele 5 from Rattus norvegicus (Rat).